A 235-amino-acid polypeptide reads, in one-letter code: Adenosine 5'-phosphosulfate reductase (235 aa).

[4Fe-4S] cluster contacts are provided by C121, C122, C204, and C207. C230 serves as the catalytic Nucleophile; cysteine thiosulfonate intermediate.

Belongs to the PAPS reductase family. CysH subfamily. It depends on [4Fe-4S] cluster as a cofactor.

The protein localises to the cytoplasm. It carries out the reaction [thioredoxin]-disulfide + sulfite + AMP + 2 H(+) = adenosine 5'-phosphosulfate + [thioredoxin]-dithiol. It functions in the pathway sulfur metabolism; hydrogen sulfide biosynthesis; sulfite from sulfate. Its function is as follows. Catalyzes the formation of sulfite from adenosine 5'-phosphosulfate (APS) using thioredoxin as an electron donor. In Anoxybacillus flavithermus (strain DSM 21510 / WK1), this protein is Adenosine 5'-phosphosulfate reductase.